Here is a 269-residue protein sequence, read N- to C-terminus: Dihydropteroate synthase (269 aa).

One can recognise a Pterin-binding domain in the interval 14-261 (TYIMGILNFT…DVLENSRAAK (248 aa)). Position 21 (Asn-21) interacts with Mg(2+). Residues Thr-61, Asp-95, Asn-114, Asp-178, Lys-214, and 249-251 (RVH) contribute to the (7,8-dihydropterin-6-yl)methyl diphosphate site.

The protein belongs to the DHPS family. The cofactor is Mg(2+).

The catalysed reaction is (7,8-dihydropterin-6-yl)methyl diphosphate + 4-aminobenzoate = 7,8-dihydropteroate + diphosphate. The protein operates within cofactor biosynthesis; tetrahydrofolate biosynthesis; 7,8-dihydrofolate from 2-amino-4-hydroxy-6-hydroxymethyl-7,8-dihydropteridine diphosphate and 4-aminobenzoate: step 1/2. Functionally, catalyzes the condensation of para-aminobenzoate (pABA) with 6-hydroxymethyl-7,8-dihydropterin diphosphate (DHPt-PP) to form 7,8-dihydropteroate (H2Pte), the immediate precursor of folate derivatives. This is Dihydropteroate synthase from Clostridium beijerinckii (strain ATCC 51743 / NCIMB 8052) (Clostridium acetobutylicum).